The primary structure comprises 491 residues: Iota-carrageenase (491 aa).

Residues 1 to 23 form the signal peptide; sequence MRLYFRKLWLTNLFLGGALASSA. Disulfide bonds link Cys269–Cys298, Cys336–Cys360, Cys408–Cys476, and Cys412–Cys484.

The protein belongs to the glycosyl hydrolase 82 family.

Its subcellular location is the secreted. The catalysed reaction is Endohydrolysis of 1,4-beta-D-linkages between D-galactose 4-sulfate and 3,6-anhydro-D-galactose-2-sulfate in iota-carrageenans.. Functionally, hydrolyzes iota-carrageenans, sulfated 1,3-alpha-1,4-beta galactans from red algal cell walls, with an inversion of anomeric configuration. Also active against hybrid iota-/nu-carrageenan, not active against kappa- or lambda-carrageenans. This chain is Iota-carrageenase, found in Alteromonas macleodii (Pseudoalteromonas macleodii).